A 396-amino-acid polypeptide reads, in one-letter code: Tryptophan synthase beta chain (396 aa).

K88 carries the post-translational modification N6-(pyridoxal phosphate)lysine.

Belongs to the TrpB family. In terms of assembly, tetramer of two alpha and two beta chains. It depends on pyridoxal 5'-phosphate as a cofactor.

It carries out the reaction (1S,2R)-1-C-(indol-3-yl)glycerol 3-phosphate + L-serine = D-glyceraldehyde 3-phosphate + L-tryptophan + H2O. It functions in the pathway amino-acid biosynthesis; L-tryptophan biosynthesis; L-tryptophan from chorismate: step 5/5. In terms of biological role, the beta subunit is responsible for the synthesis of L-tryptophan from indole and L-serine. This Actinobacillus pleuropneumoniae serotype 3 (strain JL03) protein is Tryptophan synthase beta chain.